Reading from the N-terminus, the 352-residue chain is MVFRIASSPYTHNQRQTSRIMLLVLIAALPGIAAQTWFFGWGTLFQIVLAAITALVAEAIVLRLRKQSVASHLQDYSALLTGLLLAVSIPPLAPWWIVVLGTGFAIIIAKQLYGGLGQNPFNPAMIGYVVLLISFPVQMTSWLPPYEIAATTPDILDTLRMIFSGHTASGGDMTLLRTGIDGISQATPLDTFKTSLRAGHSVEQIMQYPIYSGALAGVGWQWVNLAWLVGGVFLLWQKAIRWHIPVSFLLTLALCAALGWLFSPATLASPQLHLLSGATMLGAFFILTDPVTASTTNRGRLIFGALAGVLVWLIRSFGGYPDGVAFAVLLANITVPLIDYYTRPRVYGHRKG.

4 helical membrane-spanning segments follow: residues 20-40 (IMLL…WFFG), 42-62 (GTLF…AIVL), 69-91 (VASH…SIPP), and 123-143 (PAMI…TSWL). Position 187 is an FMN phosphoryl threonine (Thr-187). The next 5 membrane-spanning stretches (helical) occupy residues 215-235 (LAGV…VFLL), 242-262 (WHIP…GWLF), 267-287 (LASP…FFIL), 301-321 (LIFG…GGYP), and 322-342 (DGVA…DYYT).

This sequence belongs to the NqrB/RnfD family. As to quaternary structure, the complex is composed of six subunits: RsxA, RsxB, RsxC, RsxD, RsxE and RsxG. FMN serves as cofactor.

The protein localises to the cell inner membrane. In terms of biological role, part of a membrane-bound complex that couples electron transfer with translocation of ions across the membrane. Required to maintain the reduced state of SoxR. This is Ion-translocating oxidoreductase complex subunit D from Salmonella paratyphi A (strain ATCC 9150 / SARB42).